Consider the following 361-residue polypeptide: Phospho-N-acetylmuramoyl-pentapeptide-transferase (361 aa).

10 helical membrane passes run 28–48 (LAII…IEFL), 74–94 (TMGG…LADL), 99–119 (IWIT…DDYA), 133–153 (SKLL…EYLD), 168–188 (LSLD…VGSS), 203–223 (VPIA…GNLI), 236–256 (TGEL…FLWF), 263–283 (VFMG…ISVI), 288–308 (IVLA…ILQV), and 338–358 (KVVI…LSSL).

It belongs to the glycosyltransferase 4 family. MraY subfamily. Mg(2+) is required as a cofactor.

It is found in the cell membrane. The enzyme catalyses UDP-N-acetyl-alpha-D-muramoyl-L-alanyl-gamma-D-glutamyl-meso-2,6-diaminopimeloyl-D-alanyl-D-alanine + di-trans,octa-cis-undecaprenyl phosphate = di-trans,octa-cis-undecaprenyl diphospho-N-acetyl-alpha-D-muramoyl-L-alanyl-D-glutamyl-meso-2,6-diaminopimeloyl-D-alanyl-D-alanine + UMP. It participates in cell wall biogenesis; peptidoglycan biosynthesis. Catalyzes the initial step of the lipid cycle reactions in the biosynthesis of the cell wall peptidoglycan: transfers peptidoglycan precursor phospho-MurNAc-pentapeptide from UDP-MurNAc-pentapeptide onto the lipid carrier undecaprenyl phosphate, yielding undecaprenyl-pyrophosphoryl-MurNAc-pentapeptide, known as lipid I. The sequence is that of Phospho-N-acetylmuramoyl-pentapeptide-transferase from Rickettsia rickettsii.